The chain runs to 277 residues: Tryptophan synthase alpha chain (277 aa).

Residues glutamate 59 and aspartate 70 each act as proton acceptor in the active site.

This sequence belongs to the TrpA family. Tetramer of two alpha and two beta chains.

It catalyses the reaction (1S,2R)-1-C-(indol-3-yl)glycerol 3-phosphate + L-serine = D-glyceraldehyde 3-phosphate + L-tryptophan + H2O. It participates in amino-acid biosynthesis; L-tryptophan biosynthesis; L-tryptophan from chorismate: step 5/5. Its function is as follows. The alpha subunit is responsible for the aldol cleavage of indoleglycerol phosphate to indole and glyceraldehyde 3-phosphate. The protein is Tryptophan synthase alpha chain of Streptomyces avermitilis (strain ATCC 31267 / DSM 46492 / JCM 5070 / NBRC 14893 / NCIMB 12804 / NRRL 8165 / MA-4680).